Consider the following 186-residue polypeptide: Sec-independent protein translocase protein TatB (186 aa).

The helical transmembrane segment at 1–21 (MFDIGFSELILLMVLGLVVLG) threads the bilayer. The tract at residues 162 to 186 (LSSYYPPDDIEIAPASKSQSSKTKS) is disordered. Residues 177–186 (SKSQSSKTKS) are compositionally biased toward polar residues.

The protein belongs to the TatB family. In terms of assembly, the Tat system comprises two distinct complexes: a TatABC complex, containing multiple copies of TatA, TatB and TatC subunits, and a separate TatA complex, containing only TatA subunits. Substrates initially bind to the TatABC complex, which probably triggers association of the separate TatA complex to form the active translocon.

The protein localises to the cell inner membrane. Functionally, part of the twin-arginine translocation (Tat) system that transports large folded proteins containing a characteristic twin-arginine motif in their signal peptide across membranes. Together with TatC, TatB is part of a receptor directly interacting with Tat signal peptides. TatB may form an oligomeric binding site that transiently accommodates folded Tat precursor proteins before their translocation. This is Sec-independent protein translocase protein TatB from Haemophilus influenzae (strain 86-028NP).